The following is a 65-amino-acid chain: Large ribosomal subunit protein bL35 (65 aa).

Over residues 1 to 26 (MPKIKTHRGAAKRFSKTGTGKIKRSH) the composition is skewed to basic residues. Residues 1–41 (MPKIKTHRGAAKRFSKTGTGKIKRSHAFTSHILTSKTRKNK) are disordered.

It belongs to the bacterial ribosomal protein bL35 family.

The polypeptide is Large ribosomal subunit protein bL35 (Geotalea daltonii (strain DSM 22248 / JCM 15807 / FRC-32) (Geobacter daltonii)).